The primary structure comprises 227 residues: Ubiquitin domain-containing protein 1 (227 aa).

The span at 1-14 shows a compositional bias: basic and acidic residues; the sequence is MGGCVGRERAETRG. The disordered stretch occupies residues 1–45; sequence MGGCVGRERAETRGRGSRTQRKRGGRNEPLKKDKPKWKSDYPMTE. Residues 15-24 are compositionally biased toward basic residues; sequence RGSRTQRKRG. Positions 25–39 are enriched in basic and acidic residues; sequence GRNEPLKKDKPKWKS. One can recognise a Ubiquitin-like domain in the interval 150–225; the sequence is FQLKVRLSTG…IQVIVNQPAP (76 aa).

In terms of biological role, may be involved in the regulation of cellular senescence through a positive feedback loop with TP53. In Danio rerio (Zebrafish), this protein is Ubiquitin domain-containing protein 1 (ubtd1).